The sequence spans 143 residues: FAD synthase (143 aa).

ATP contacts are provided by residues 9 to 10 (TF), 14 to 17 (HPGH), and Asp92.

It belongs to the archaeal FAD synthase family. As to quaternary structure, homodimer. It depends on a divalent metal cation as a cofactor.

It catalyses the reaction FMN + ATP + H(+) = FAD + diphosphate. The protein operates within cofactor biosynthesis; FAD biosynthesis; FAD from FMN: step 1/1. Functionally, catalyzes the transfer of the AMP portion of ATP to flavin mononucleotide (FMN) to produce flavin adenine dinucleotide (FAD) coenzyme. This Methanococcoides burtonii (strain DSM 6242 / NBRC 107633 / OCM 468 / ACE-M) protein is FAD synthase.